An 80-amino-acid polypeptide reads, in one-letter code: Teretoxin Tan6.1 (80 aa).

The first 21 residues, 1–21, serve as a signal peptide directing secretion; it reads MATSGRLLCLCLVLGLVFESL. Residues 22-34 constitute a propeptide that is removed on maturation; sequence GHPGARLPKDGKR.

The protein belongs to the teretoxin M (TM) superfamily. Post-translationally, contains 3 disulfide bonds. Expressed by the venom duct.

It is found in the secreted. The protein is Teretoxin Tan6.1 of Terebra anilis (Auger snail).